The sequence spans 402 residues: Multidrug resistance protein MdtH (402 aa).

At 1–12 (MSRVSQARNLGK) the chain is on the cytoplasmic side. Residues 13 to 33 (YFLLIDNMLVVLGFFVVFPLI) form a helical membrane-spanning segment. The Periplasmic segment spans residues 34–98 (SIRFVDQMGW…GFATMGIAHE (65 aa)). Residues 99–116 (PWLLWFSCLLSGLGGTLF) form a helical membrane-spanning segment. Over 117–138 (DPPRSALVVKLIRPQQRGRFFS) the chain is Cytoplasmic. Residues 139 to 159 (LLMMQDSAGAVIGALLGSWLL) form a helical membrane-spanning segment. Residues 160-164 (QYDFR) are Periplasmic-facing. A helical transmembrane segment spans residues 165–185 (LVCATGAVLFVLCAAFNAWLL). Residues 186 to 213 (PAWKLSTVRTPVREGMTRVMRDKRFVTY) lie on the Cytoplasmic side of the membrane. Residues 214 to 234 (VLTLAGYYMLAVQVMLMLPIM) form a helical membrane-spanning segment. Residues 235–243 (VNDVAGAPS) lie on the Periplasmic side of the membrane. Residues 244–264 (AVKWMYAIEACLSLTLLYPIA) form a helical membrane-spanning segment. Topologically, residues 265–276 (RWSEKHFRLEHR) are cytoplasmic. The chain crosses the membrane as a helical span at residues 277–297 (LMAGLLIMSLSMMPVGMVSGL). The Periplasmic portion of the chain corresponds to 298–299 (QQ). Residues 300-320 (LFTLICLFYIGSIIAEPARET) form a helical membrane-spanning segment. The Cytoplasmic segment spans residues 321-339 (LSASLADARARGSYMGFSR). Residues 340-360 (LGLAIGGAIGYIGGGWLFDLG) traverse the membrane as a helical segment. Over 361–367 (KSAHQPE) the chain is Periplasmic. The chain crosses the membrane as a helical span at residues 368 to 388 (LPWMMLGIIGIFTFLALGWQF). The Cytoplasmic segment spans residues 389 to 402 (SQKRAARRLLERDA).

Belongs to the major facilitator superfamily. DHA1 family. MdtH (TC 2.A.1.2.21) subfamily.

It localises to the cell inner membrane. Functionally, confers resistance to norfloxacin and enoxacin. The sequence is that of Multidrug resistance protein MdtH from Escherichia coli O139:H28 (strain E24377A / ETEC).